Consider the following 202-residue polypeptide: Protein DEHYDRATION-INDUCED 19 homolog 5 (202 aa).

Basic residues predominate over residues 88–97 (SHLLKRRKPS). Residues 88–120 (SHLLKRRKPSRPSSSWPTPSNNSDPYFEGPPQY) are disordered. The segment covering 98–112 (RPSSSWPTPSNNSDP) has biased composition (low complexity).

This sequence belongs to the Di19 family.

The sequence is that of Protein DEHYDRATION-INDUCED 19 homolog 5 (DI19-5) from Oryza sativa subsp. japonica (Rice).